Reading from the N-terminus, the 270-residue chain is Putative pyruvate, phosphate dikinase regulatory protein (270 aa).

151-158 contributes to the ADP binding site; it reads GVSRTSKT.

Belongs to the pyruvate, phosphate/water dikinase regulatory protein family. PDRP subfamily.

It carries out the reaction N(tele)-phospho-L-histidyl/L-threonyl-[pyruvate, phosphate dikinase] + ADP = N(tele)-phospho-L-histidyl/O-phospho-L-threonyl-[pyruvate, phosphate dikinase] + AMP + H(+). It catalyses the reaction N(tele)-phospho-L-histidyl/O-phospho-L-threonyl-[pyruvate, phosphate dikinase] + phosphate + H(+) = N(tele)-phospho-L-histidyl/L-threonyl-[pyruvate, phosphate dikinase] + diphosphate. In terms of biological role, bifunctional serine/threonine kinase and phosphorylase involved in the regulation of the pyruvate, phosphate dikinase (PPDK) by catalyzing its phosphorylation/dephosphorylation. In Lysinibacillus sphaericus (strain C3-41), this protein is Putative pyruvate, phosphate dikinase regulatory protein.